Consider the following 591-residue polypeptide: MTAPGFTVSAFILLLHVSFVANYPSGKVTKSCGGMIPEHGHTPQSHPAHNISVSQKTFRPGDQIKVTLSGPPFKGFLLEARDAENLSGPPVGSFTLIDSHVSQLLTCEDVQGSAVSHRSPSKKTEIKVFWDAPSGAPNHITFLATVVEKYKIYWVKIPGPVISQPNVPPFTTPEATIAPMPTVPSVSHLTRSFNASDCGNKKFCIRSPLNCDPEKERACVLLSFTRDDQSVMVEMSGPSKGYLSVAFSHDRWMGDDDAYVCILEDQIVHIQPSHLTGRSHPIMDFGDPLEDMAWRLVDGVMQCSFRRNITLPGVKNRFDLNASYYIFVADGAAVDGRIHKHSQQPLITYEKYNVTGDPKNIGGSHSLLLLKVHGALMFVAWMTTVSVGVLIARFFKPVWSKALFGDAAWFQVHRTLMLTTSALTFIAFLLPFIYRGGWNWHAGYHPYLGFIVMVLAVLQLLLAAFRPPLHDPRRQMFNWTHWSMGTAARIIAVAAMFLGMDLPGLNLPGPWKTYAMIGFVAWHVGTEIILEIHAYRLSRKVEILDDDRIQILQSFTAAEAEGYVFKKVVLAIYVCGNLTFLTMFLSAINRL.

The chain crosses the membrane as a helical span at residues 6–26; that stretch reads FTVSAFILLLHVSFVANYPSG. One can recognise a Reelin domain in the interval 13–179; sequence LLLHVSFVAN…FTTPEATIAP (167 aa). 5 N-linked (GlcNAc...) asparagine glycosylation sites follow: Asn-50, Asn-85, Asn-308, Asn-321, and Asn-353. Positions 216-331 constitute a DOMON domain; the sequence is ERACVLLSFT…ASYYIFVADG (116 aa). In terms of domain architecture, Cytochrome b561 spans 335–533; that stretch reads DGRIHKHSQQ…VGTEIILEIH (199 aa). Residues 372–392 traverse the membrane as a helical segment; sequence VHGALMFVAWMTTVSVGVLIA. Heme b is bound by residues His-373 and His-413. 2 consecutive transmembrane segments (helical) span residues 416-436 and 445-465; these read LMLT…IYRG and HPYL…LAAF. Heme b contacts are provided by His-445 and His-481. Transmembrane regions (helical) follow at residues 490–510, 514–534, and 568–588; these read IIAV…LPGP, YAMI…EIHA, and VVLA…LSAI.

It belongs to the FRRS1 family. Heme b serves as cofactor.

It is found in the membrane. Its function is as follows. Ferric-chelate reductases reduce Fe(3+) to Fe(2+) before its transport from the endosome to the cytoplasm. This chain is Ferric-chelate reductase 1 (FRRS1), found in Bos taurus (Bovine).